The sequence spans 565 residues: Adenine deaminase 1 (565 aa).

The protein belongs to the metallo-dependent hydrolases superfamily. Adenine deaminase family. Mn(2+) serves as cofactor.

It catalyses the reaction adenine + H2O + H(+) = hypoxanthine + NH4(+). This chain is Adenine deaminase 1, found in Rhizobium meliloti (strain 1021) (Ensifer meliloti).